A 335-amino-acid chain; its full sequence is Spliceosome-associated protein 49 (335 aa).

RRM domains follow at residues 13–84 and 101–172; these read IYLG…PIRV and LFVG…PITV. The segment at 204 to 223 is disordered; the sequence is VTPQSTLPPGFSPATPAPTS.

It belongs to the SF3B4 family.

The protein resides in the nucleus. This Schizosaccharomyces pombe (strain 972 / ATCC 24843) (Fission yeast) protein is Spliceosome-associated protein 49 (sap49).